The sequence spans 275 residues: NH(3)-dependent NAD(+) synthetase (275 aa).

46 to 53 (GISGGQDS) provides a ligand contact to ATP. A Mg(2+)-binding site is contributed by Asp-52. Arg-140 is a deamido-NAD(+) binding site. Thr-160 is a binding site for ATP. Glu-165 lines the Mg(2+) pocket. Deamido-NAD(+) contacts are provided by Lys-173 and Asp-180. Residues Lys-189 and Thr-211 each contribute to the ATP site. 260–261 (HK) contacts deamido-NAD(+).

This sequence belongs to the NAD synthetase family. In terms of assembly, homodimer.

It catalyses the reaction deamido-NAD(+) + NH4(+) + ATP = AMP + diphosphate + NAD(+) + H(+). The protein operates within cofactor biosynthesis; NAD(+) biosynthesis; NAD(+) from deamido-NAD(+) (ammonia route): step 1/1. Functionally, catalyzes the ATP-dependent amidation of deamido-NAD to form NAD. Uses ammonia as a nitrogen source. In Escherichia coli O157:H7, this protein is NH(3)-dependent NAD(+) synthetase.